Here is a 1809-residue protein sequence, read N- to C-terminus: Pyochelin synthetase PchF (1809 aa).

Residues 69–490 (FPLTPVQAAY…GLLRRLAQSP (422 aa)) form a condensation/cyclization region. The segment at 520–915 (FAERALLTPD…GREDDQVKIR (396 aa)) is adenylation. Residues 1407-1488 (APADELESAL…GLAERLRSAP (82 aa)) enclose the Carrier domain. S1442 is subject to O-(pantetheine 4'-phosphoryl)serine. The tract at residues 1584–1797 (LGRRYAEALH…FDCLGEALAQ (214 aa)) is thioesterase.

Belongs to the NRP synthetase family. Pantetheine 4'-phosphate is required as a cofactor.

It catalyses the reaction holo-[peptidyl-carrier protein] + L-cysteine + ATP = L-cysteinyl-[peptidyl-carrier protein] + AMP + diphosphate. It functions in the pathway siderophore biosynthesis. Its function is as follows. Involved in the biosynthesis of the siderophore pyochelin. Adenylates L-cysteine and loads it onto its peptidyl carrier domain via a thioester linkage to the phosphopanthetheine moiety. Then forms a peptide bond between the salicyl-thiazolinyl intermediate bound to the second carrier domain of PchE and the cysteine bound to its own peptidyl carrier domain to form the salicyl-thiazolinyl-cysteinyl-S-PCP2 intermediate. It subsequently cyclizes the C-terminal cysteine to form the second thiazoline heterocycle in the salicyl-thiazolinyl-thiazolinyl-S-PCP2 intermediate. When this intermediate is released by the action of a thioesterase, it produces the tricyclic acid hydroxyphenyl-thiazolyl-thiazolinyl-carboxylic acid (HPTT-COOH), an advanced intermediate containing the aryl-4,2-bis-heterocyclic skeleton of the bithiazoline class of siderophores. The polypeptide is Pyochelin synthetase PchF (Pseudomonas aeruginosa (strain UCBPP-PA14)).